The chain runs to 532 residues: E3 ubiquitin-protein ligase MGRN1 (532 aa).

Gly2 carries N-myristoyl glycine lipidation. An RING-type zinc finger spans residues 277–316 (ECVVCLSDLRDTLILPCRHLCLCTSCADTLRYQANNCPIC). Residues 384 to 387 (PSAP) carry the Required for TSG101-binding motif. Tyr389 bears the Phosphotyrosine mark. The segment at 419–518 (LQKGKTQSKS…QPVPPADIYL (100 aa)) is disordered. Residues 422–435 (GKTQSKSPDSTLRS) show a composition bias toward polar residues. A phosphoserine mark is found at Ser428, Ser449, Ser452, and Ser501. Residues 442 to 453 (EEDEEKLSEDSD) show a composition bias toward acidic residues.

Interacts with MC1R and MC4R. Interacts with TSG101. Interacts with mislocalized cytosolically exposed PRNP; this interaction alters MGRN1 subcellular location and causes lysosomal enlargement. Post-translationally, autoubiquitinated in vitro. In terms of tissue distribution, widely expressed, with highest levels in brain, heart, kidney and liver. In the CNS, especially prominent in the Purkinje cells of the cerebellum. In the skin, expressed in the basal layer of the epidermis and hair follicles, primarily in the outer root sheath. Isoforms 1, 3, 4 and 5 are equally expressed in the liver. Isoforms 1, 3 and 4 are most abundant in brain, kidney and heart, respectively.

It is found in the early endosome. The protein localises to the cytoplasm. Its subcellular location is the cell membrane. It localises to the nucleus. It catalyses the reaction S-ubiquitinyl-[E2 ubiquitin-conjugating enzyme]-L-cysteine + [acceptor protein]-L-lysine = [E2 ubiquitin-conjugating enzyme]-L-cysteine + N(6)-ubiquitinyl-[acceptor protein]-L-lysine.. It participates in protein modification; protein ubiquitination. In terms of biological role, E3 ubiquitin-protein ligase. Mediates TSG101 monoubiquitination at multiple sites. Plays a role in the regulation of endosome-to-lysosome trafficking. Impairs MC1R- and MC4R-signaling by competing with GNAS-binding to MCRs and inhibiting agonist-induced cAMP production. Does not inhibit ADRB2-signaling. Does not promote MC1R ubiquitination. Also acts as a negative regulator of hedgehog signaling. The chain is E3 ubiquitin-protein ligase MGRN1 (Mgrn1) from Mus musculus (Mouse).